The primary structure comprises 380 residues: L-prolyl-[peptidyl-carrier protein] dehydrogenase (380 aa).

Residue Glu-243 is the Proton acceptor of the active site. FAD-binding residues include Arg-269 and Gln-280.

It belongs to the acyl-CoA dehydrogenase family. It depends on FAD as a cofactor.

The enzyme catalyses L-prolyl-[peptidyl-carrier protein] + 2 oxidized [electron-transfer flavoprotein] + H(+) = (1H-pyrrole-2-carbonyl)-[peptidyl-carrier protein] + 2 reduced [electron-transfer flavoprotein]. Functionally, involved in the biosynthesis of pyoluteorin. Catalyzes the desaturation of the L-prolyl-[PltL] to yield 1H-pyrrole-2-carbonyl-[PltL]. The sequence is that of L-prolyl-[peptidyl-carrier protein] dehydrogenase from Pseudomonas fluorescens (strain ATCC BAA-477 / NRRL B-23932 / Pf-5).